The primary structure comprises 218 residues: Small ribosomal subunit protein uS3c (218 aa).

One can recognise a KH type-2 domain in the interval 47–118; that stretch reads VYKNIRNSSN…KLRMTLTEVT (72 aa).

Belongs to the universal ribosomal protein uS3 family. As to quaternary structure, part of the 30S ribosomal subunit.

It localises to the plastid. Its subcellular location is the chloroplast. This is Small ribosomal subunit protein uS3c (rps3) from Physcomitrium patens (Spreading-leaved earth moss).